A 293-amino-acid chain; its full sequence is uncharacterized protein (293 aa).

Disordered stretches follow at residues 1 to 95 (MFLR…KDKA) and 268 to 293 (EETA…GRAL). Residues serine 34, serine 35, and serine 89 each carry the phosphoserine modification. Basic and acidic residues-rich tracts occupy residues 85–95 (KRMDSLKKDKA) and 277–286 (GQGKEAKEQT).

This is an uncharacterized protein from Rattus norvegicus (Rat).